Consider the following 95-residue polypeptide: Corticostatin-3 (95 aa).

A signal peptide spans 1-19 (MRTLALLAAILLVALQAQA). The propeptide occupies 20–62 (EHVSVSIDEVVDQQPPQAEDQDVAIYVKEHESSALEALGVKAG). Disulfide bonds link C65-C93, C67-C82, and C72-C92.

This sequence belongs to the alpha-defensin family.

It is found in the secreted. In terms of biological role, this peptide has antibiotic, anti-fungi and antiviral activity. It also inhibits corticotropin (ACTH) stimulated corticosterone production. The sequence is that of Corticostatin-3 from Oryctolagus cuniculus (Rabbit).